We begin with the raw amino-acid sequence, 507 residues long: Maturase K (507 aa).

The protein belongs to the intron maturase 2 family. MatK subfamily.

It is found in the plastid. Its subcellular location is the chloroplast. Functionally, usually encoded in the trnK tRNA gene intron. Probably assists in splicing its own and other chloroplast group II introns. The polypeptide is Maturase K (Cupaniopsis anacardioides (Carrotwood)).